The following is a 361-amino-acid chain: Phenylalanine--tRNA ligase alpha subunit (361 aa).

E260 serves as a coordination point for Mg(2+).

The protein belongs to the class-II aminoacyl-tRNA synthetase family. Phe-tRNA synthetase alpha subunit type 1 subfamily. In terms of assembly, tetramer of two alpha and two beta subunits. Requires Mg(2+) as cofactor.

The protein resides in the cytoplasm. The enzyme catalyses tRNA(Phe) + L-phenylalanine + ATP = L-phenylalanyl-tRNA(Phe) + AMP + diphosphate + H(+). This chain is Phenylalanine--tRNA ligase alpha subunit, found in Bartonella henselae (strain ATCC 49882 / DSM 28221 / CCUG 30454 / Houston 1) (Rochalimaea henselae).